The primary structure comprises 81 residues: MLQMLTLEEWAAEKYRSNPPSVSTLRRYAKQNLFCPPAMKQGRLWRVREDAELVGELVTPVIKKNDSLLLQRILSNGSQTA.

This sequence to lambdoid phages excisionases.

The chain is Prophage excisionase-like protein (xisE) from Escherichia coli (strain K12).